A 534-amino-acid polypeptide reads, in one-letter code: Peptide chain release factor 3 (534 aa).

The region spanning 9–278 is the tr-type G domain; sequence ARRRTFAIIS…FFVEHAPSPQ (270 aa). GTP-binding positions include 18–25, 86–90, and 140–143; these read SHPDAGKT, DTPGH, and NKLD.

It belongs to the TRAFAC class translation factor GTPase superfamily. Classic translation factor GTPase family. PrfC subfamily.

The protein localises to the cytoplasm. In terms of biological role, increases the formation of ribosomal termination complexes and stimulates activities of RF-1 and RF-2. It binds guanine nucleotides and has strong preference for UGA stop codons. It may interact directly with the ribosome. The stimulation of RF-1 and RF-2 is significantly reduced by GTP and GDP, but not by GMP. The chain is Peptide chain release factor 3 from Xylella fastidiosa (strain M23).